A 200-amino-acid polypeptide reads, in one-letter code: MGKKDRDSSKPRGRMSAYAYFVQDSRAEHGKNHPNSPVRFAEFSKDCSARWKALEEKGKGVFHEKSMRDKVRYDREMQSYKPPKGEKNKRRRRRKDPDAPKRNLSAFFIFSGENRAAIKSVHPNWSVGDIAKELAVRWRAMTAGEKIPFDKGAAKDKERYIKAMAEYKAKAKPMKRQVKESSSSSSSDSSSDDSSSDDSD.

2 consecutive DNA-binding regions (HMG box) follow at residues 11 to 81 and 100 to 168; these read PRGR…QSYK and PKRN…AEYK. A compositionally biased stretch (basic and acidic residues) spans 64–86; it reads EKSMRDKVRYDREMQSYKPPKGE. Disordered regions lie at residues 64–103 and 169–200; these read EKSM…PKRN and AKAK…DDSD. A compositionally biased stretch (acidic residues) spans 190–200; it reads SSDDSSSDDSD.

Belongs to the HMGB family.

The protein resides in the nucleus. It localises to the chromosome. Its function is as follows. Binds preferentially single-stranded DNA and unwinds double-stranded DNA. The protein is High mobility group protein 1 homolog (HMG1) of Strongylocentrotus purpuratus (Purple sea urchin).